Consider the following 313-residue polypeptide: ADP-L-glycero-D-manno-heptose-6-epimerase (313 aa).

NADP(+)-binding positions include 10-11 (FI), 31-32 (DD), R38, K53, 75-79 (EGACS), and N92. Residue Y139 is the Proton acceptor of the active site. An NADP(+)-binding site is contributed by K143. Residue N168 participates in substrate binding. NADP(+) is bound by residues V169 and K177. K177 functions as the Proton acceptor in the catalytic mechanism. Substrate contacts are provided by residues K179, H186, 200–203 (FEGW), R213, and Y277.

The protein belongs to the NAD(P)-dependent epimerase/dehydratase family. HldD subfamily. As to quaternary structure, homopentamer. The cofactor is NADP(+).

It carries out the reaction ADP-D-glycero-beta-D-manno-heptose = ADP-L-glycero-beta-D-manno-heptose. The protein operates within nucleotide-sugar biosynthesis; ADP-L-glycero-beta-D-manno-heptose biosynthesis; ADP-L-glycero-beta-D-manno-heptose from D-glycero-beta-D-manno-heptose 7-phosphate: step 4/4. Functionally, catalyzes the interconversion between ADP-D-glycero-beta-D-manno-heptose and ADP-L-glycero-beta-D-manno-heptose via an epimerization at carbon 6 of the heptose. This chain is ADP-L-glycero-D-manno-heptose-6-epimerase, found in Marinobacter nauticus (strain ATCC 700491 / DSM 11845 / VT8) (Marinobacter aquaeolei).